Consider the following 242-residue polypeptide: Ubiquinone biosynthesis O-methyltransferase (242 aa).

4 residues coordinate S-adenosyl-L-methionine: Arg44, Gly64, Asp85, and Met129.

The protein belongs to the methyltransferase superfamily. UbiG/COQ3 family.

The enzyme catalyses a 3-demethylubiquinol + S-adenosyl-L-methionine = a ubiquinol + S-adenosyl-L-homocysteine + H(+). It catalyses the reaction a 3-(all-trans-polyprenyl)benzene-1,2-diol + S-adenosyl-L-methionine = a 2-methoxy-6-(all-trans-polyprenyl)phenol + S-adenosyl-L-homocysteine + H(+). Its pathway is cofactor biosynthesis; ubiquinone biosynthesis. O-methyltransferase that catalyzes the 2 O-methylation steps in the ubiquinone biosynthetic pathway. This is Ubiquinone biosynthesis O-methyltransferase from Salmonella choleraesuis (strain SC-B67).